A 235-amino-acid polypeptide reads, in one-letter code: MAFVLPAKGILQSEALKQYIYETSAYPGEHEQLKELREATTKKYGSLSGMSVPVDEGRFLSMLLKLMNAKRTLEVGVFTGYSLLSTALALPEDGQVTAIDKDRGAYEIGLPFIQKAGVEDKINFIQSEAPPILNEMLCNDKQPEFDFAFVDADKSSYKHYHEQLLKLVKIGGIIAYDNTLWYGLVAKEVDDEVPEPLRMVRTVIMEFNKLLSSDLRVEISQISIGDGVTLCRRLC.

Lysine 8 serves as a coordination point for substrate. Residues valine 52, glutamate 74, 76–77 (GV), serine 82, aspartate 100, and alanine 129 contribute to the S-adenosyl-L-methionine site. Residue aspartate 151 participates in substrate binding. Position 151 (aspartate 151) interacts with a divalent metal cation. Aspartate 153 contacts S-adenosyl-L-methionine. Residues aspartate 177 and asparagine 178 each coordinate a divalent metal cation.

Belongs to the class I-like SAM-binding methyltransferase superfamily. Cation-dependent O-methyltransferase family. CCoAMT subfamily. A divalent metal cation serves as cofactor.

It catalyses the reaction (E)-caffeoyl-CoA + S-adenosyl-L-methionine = (E)-feruloyl-CoA + S-adenosyl-L-homocysteine + H(+). Its pathway is aromatic compound metabolism; phenylpropanoid biosynthesis. Its function is as follows. Methylates caffeoyl-CoA to feruloyl-CoA and 5-hydroxyferuloyl-CoA to sinapoyl-CoA. Plays a role in the synthesis of feruloylated polysaccharides. Involved in the reinforcement of the plant cell wall. Also involved in the responding to wounding or pathogen challenge by the increased formation of cell wall-bound ferulic acid polymers. In Populus kitakamiensis (Aspen), this protein is Caffeoyl-CoA O-methyltransferase.